Reading from the N-terminus, the 237-residue chain is Leucyl/phenylalanyl-tRNA--protein transferase (237 aa).

It belongs to the L/F-transferase family.

The protein resides in the cytoplasm. The catalysed reaction is N-terminal L-lysyl-[protein] + L-leucyl-tRNA(Leu) = N-terminal L-leucyl-L-lysyl-[protein] + tRNA(Leu) + H(+). It carries out the reaction N-terminal L-arginyl-[protein] + L-leucyl-tRNA(Leu) = N-terminal L-leucyl-L-arginyl-[protein] + tRNA(Leu) + H(+). The enzyme catalyses L-phenylalanyl-tRNA(Phe) + an N-terminal L-alpha-aminoacyl-[protein] = an N-terminal L-phenylalanyl-L-alpha-aminoacyl-[protein] + tRNA(Phe). In terms of biological role, functions in the N-end rule pathway of protein degradation where it conjugates Leu, Phe and, less efficiently, Met from aminoacyl-tRNAs to the N-termini of proteins containing an N-terminal arginine or lysine. In Shewanella baltica (strain OS195), this protein is Leucyl/phenylalanyl-tRNA--protein transferase.